A 451-amino-acid chain; its full sequence is Tubulin alpha-1B chain (451 aa).

The MREC motif motif lies at 1 to 4 (MREC). Positions 10, 11, 12, and 15 each coordinate GTP. K40 bears the N6,N6,N6-trimethyllysine; alternate mark. At K40 the chain carries N6-acetyllysine; alternate. Residue S48 is modified to Phosphoserine. 12 residues coordinate GTP: E71, A99, S140, G143, G144, T145, G146, T179, E183, N206, Y224, and N228. E71 provides a ligand contact to Mg(2+). S232 is subject to Phosphoserine. L252 contacts GTP. E254 is an active-site residue. Residue Y282 is modified to 3'-nitrotyrosine. K326 participates in a covalent cross-link: Glycyl lysine isopeptide (Lys-Gly) (interchain with G-Cter in ubiquitin). At R339 the chain carries Omega-N-methylarginine. K370 is covalently cross-linked (Glycyl lysine isopeptide (Lys-Gly) (interchain with G-Cter in ubiquitin)). The segment at 432–451 (YEEVGVDSVEGEGEEEGEEY) is disordered. Position 439 is a phosphoserine (S439). 5-glutamyl polyglutamate is present on residues E443 and E445. The residue at position 451 (Y451) is a 3'-nitrotyrosine.

The protein belongs to the tubulin family. In terms of assembly, heterodimer of alpha- and beta-tubulin. A typical microtubule is a hollow water-filled tube with an outer diameter of 25 nm and an inner diameter of 15 nM. Alpha-beta heterodimers associate head-to-tail to form protofilaments running lengthwise along the microtubule wall with the beta-tubulin subunit facing the microtubule plus end conferring a structural polarity. Microtubules usually have 13 protofilaments but different protofilament numbers can be found in some organisms and specialized cells. Interacts with gamma-tubulin; the interaction allows microtubules to nucleate from the gamma-tubulin ring complex (gTuRC). Nascent microtubule interacts (via alpha-tubulin MREC motif) with TTC5/STRAP; this interaction may result in tubulin mRNA-targeted degradation. Component of sperm flagellar doublet microtubules. It depends on Mg(2+) as a cofactor. Post-translationally, some glutamate residues at the C-terminus are polyglutamylated, resulting in polyglutamate chains on the gamma-carboxyl group. Polyglutamylation plays a key role in microtubule severing by spastin (SPAST). SPAST preferentially recognizes and acts on microtubules decorated with short polyglutamate tails: severing activity by SPAST increases as the number of glutamates per tubulin rises from one to eight, but decreases beyond this glutamylation threshold. Glutamylation is also involved in cilia motility. In terms of processing, some glutamate residues at the C-terminus are monoglycylated but not polyglycylated due to the absence of functional TTLL10 in human. Monoglycylation is mainly limited to tubulin incorporated into cilia and flagella axonemes, which is required for their stability and maintenance. Flagella glycylation controls sperm motility. Both polyglutamylation and monoglycylation can coexist on the same protein on adjacent residues, and lowering glycylation levels increases polyglutamylation, and reciprocally. Acetylation of alpha chains at Lys-40 is located inside the microtubule lumen. This modification has been correlated with increased microtubule stability, intracellular transport and ciliary assembly. Post-translationally, methylation of alpha chains at Lys-40 is found in mitotic microtubules and is required for normal mitosis and cytokinesis contributing to genomic stability. In terms of processing, nitration of Tyr-451 is irreversible and interferes with normal dynein intracellular distribution. Undergoes a tyrosination/detyrosination cycle, the cyclic removal and re-addition of a C-terminal tyrosine residue by the enzymes tubulin tyrosine carboxypeptidase (MATCAP1/KIAA0895L, VASH1 or VASH2) and tubulin tyrosine ligase (TTL), respectively. Post-translationally, tyrosination promotes microtubule interaction with CAP-Gly domain-containing proteins such as CLIP1, CLIP2 and DCTN1. Tyrosination regulates the initiation of dynein-dynactin motility via interaction with DCTN1, which brings the dynein-dynactin complex into contact with microtubules. In neurons, tyrosinated tubulins mediate the initiation of retrograde vesicle transport. In terms of processing, detyrosination is involved in metaphase plate congression by guiding chromosomes during mitosis: detyrosination promotes interaction with CENPE, promoting pole-proximal transport of chromosomes toward the equator. Detyrosination increases microtubules-dependent mechanotransduction in dystrophic cardiac and skeletal muscle. In cardiomyocytes, detyrosinated microtubules are required to resist to contractile compression during contraction: detyrosination promotes association with desmin (DES) at force-generating sarcomeres, leading to buckled microtubules and mechanical resistance to contraction.

The protein localises to the cytoplasm. The protein resides in the cytoskeleton. It catalyses the reaction GTP + H2O = GDP + phosphate + H(+). Functionally, tubulin is the major constituent of microtubules, protein filaments consisting of alpha- and beta-tubulin heterodimers. Microtubules grow by the addition of GTP-tubulin dimers to the microtubule end, where a stabilizing cap forms. Below the cap, tubulin dimers are in GDP-bound state, owing to GTPase activity of alpha-tubulin. The protein is Tubulin alpha-1B chain (TUBA1B) of Homo sapiens (Human).